A 494-amino-acid polypeptide reads, in one-letter code: Serine/threonine-protein kinase PBL13 (494 aa).

Cys4 is lipidated: S-palmitoyl cysteine. Residue Thr65 is modified to Phosphothreonine. The 281-residue stretch at 76-356 folds into the Protein kinase domain; the sequence is FSSSNFLGEG…STVVSVLQDI (281 aa). ATP contacts are provided by residues 82–90 and Lys111; that span reads LGEGGFGPV. Residue Tyr156 is modified to Phosphotyrosine. Residue Asp206 is the Proton acceptor of the active site. A Phosphoserine modification is found at Ser210. Ser240 is modified (phosphoserine; by autocatalysis). 2 positions are modified to phosphothreonine: Thr241 and Thr246. Phosphotyrosine is present on Tyr254. Ser321 carries the post-translational modification Phosphoserine; by autocatalysis. Phosphothreonine; by autocatalysis is present on residues Thr323 and Thr383. The residue at position 384 (Ser384) is a Phosphoserine; by autocatalysis. Phosphothreonine; by autocatalysis is present on residues Thr395, Thr398, Thr406, Thr413, Thr421, and Thr428. Phosphoserine; by autocatalysis is present on Ser429. The tract at residues 434–471 is disordered; it reads DKTRREVKETSLQNFDKPRNVSTTDNHQKFRSPAHTAR. The residue at position 443 (Thr443) is a Phosphothreonine; by autocatalysis. Polar residues predominate over residues 443–458; it reads TSLQNFDKPRNVSTTD. Ser444 and Ser455 each carry phosphoserine; by autocatalysis. A Phosphothreonine; by autocatalysis modification is found at Thr456. The segment covering 462-471 has biased composition (basic residues); sequence KFRSPAHTAR. Tyr481 bears the Phosphotyrosine; by autocatalysis mark.

This sequence belongs to the protein kinase superfamily. Ser/Thr protein kinase family. Interacts with RBHOD. Interaction is disrupted by flagellin-induced immune signaling.

It localises to the cell membrane. It catalyses the reaction L-seryl-[protein] + ATP = O-phospho-L-seryl-[protein] + ADP + H(+). The catalysed reaction is L-threonyl-[protein] + ATP = O-phospho-L-threonyl-[protein] + ADP + H(+). In terms of biological role, involved in defense responses. Acts as a negative regulator of plant immune responses. The protein is Serine/threonine-protein kinase PBL13 of Arabidopsis thaliana (Mouse-ear cress).